A 107-amino-acid chain; its full sequence is Thiosulfate sulfurtransferase GlpE (107 aa).

The Rhodanese domain occupies 19-107 (KDHNARMVDI…WNKAGLPVEK (89 aa)). Cys-67 functions as the Cysteine persulfide intermediate in the catalytic mechanism.

Belongs to the GlpE family.

The protein resides in the cytoplasm. It carries out the reaction thiosulfate + hydrogen cyanide = thiocyanate + sulfite + 2 H(+). It catalyses the reaction thiosulfate + [thioredoxin]-dithiol = [thioredoxin]-disulfide + hydrogen sulfide + sulfite + 2 H(+). Functionally, transferase that catalyzes the transfer of sulfur from thiosulfate to thiophilic acceptors such as cyanide or dithiols. May function in a CysM-independent thiosulfate assimilation pathway by catalyzing the conversion of thiosulfate to sulfite, which can then be used for L-cysteine biosynthesis. The polypeptide is Thiosulfate sulfurtransferase GlpE (Aliivibrio salmonicida (strain LFI1238) (Vibrio salmonicida (strain LFI1238))).